The following is a 653-amino-acid chain: Modification methylase StsI (653 aa).

Belongs to the N(4)/N(6)-methyltransferase family. As to quaternary structure, monomer.

The enzyme catalyses a 2'-deoxyadenosine in DNA + S-adenosyl-L-methionine = an N(6)-methyl-2'-deoxyadenosine in DNA + S-adenosyl-L-homocysteine + H(+). Its function is as follows. An alpha subtype methylase that recognizes the double-stranded sequence 5'-GGATG-3' in one strand and 3'-CATCC-5' in the other, methylates A of both strands, and protects the DNA from cleavage by the StsI endonuclease. The 2 domains of the protein participate in modification of the two strands. The polypeptide is Modification methylase StsI (stsIM) (Streptococcus sanguinis).